Here is a 282-residue protein sequence, read N- to C-terminus: Protein-export membrane protein SecF (282 aa).

The next 6 membrane-spanning stretches (helical) occupy residues 9–29, 120–140, 149–169, 174–194, 214–234, and 236–256; these read IAIP…KGIP, EGFK…YLYF, IILS…LLGI, ATIA…ILLT, KTGL…LIVV, and LFIP…LALI.

It belongs to the SecD/SecF family. SecF subfamily. In terms of assembly, part of the protein translocation apparatus. Forms a complex with SecD.

Its subcellular location is the cell membrane. In terms of biological role, involved in protein export. This is Protein-export membrane protein SecF from Methanocaldococcus jannaschii (strain ATCC 43067 / DSM 2661 / JAL-1 / JCM 10045 / NBRC 100440) (Methanococcus jannaschii).